The sequence spans 298 residues: Short-chain dehydrogenase reductase 4 (298 aa).

50 to 74 (IITGGASGIGAEAVRLFTDHGAKVV) lines the NAD(+) pocket. Ser182 lines the substrate pocket. Catalysis depends on Tyr195, which acts as the Proton acceptor.

Belongs to the short-chain dehydrogenases/reductases (SDR) family.

The polypeptide is Short-chain dehydrogenase reductase 4 (SDR4) (Arabidopsis thaliana (Mouse-ear cress)).